We begin with the raw amino-acid sequence, 755 residues long: Bacteriophytochrome (755 aa).

A tetrapyrrole is bound at residue Cys-24. The PAS domain maps to 26-94; sequence REPIHIPGSI…LQAALPPGCP (69 aa). The chromophore binding domain stretch occupies residues 95 to 504; the sequence is DALQYRATLD…RDTLTGALGE (410 aa). One can recognise a GAF domain in the interval 152–316; the sequence is NLRALAEVAT…YLGRLLSLQV (165 aa). The Histidine kinase domain occupies 529 to 747; the sequence is VISHHMQEPV…TFRCWLPDAG (219 aa). At His-532 the chain carries Phosphohistidine; by autocatalysis.

In the N-terminal section; belongs to the phytochrome family. In terms of processing, contains one covalently linked tetrapyrrole chromophore. Lacks the cysteine conserved in plant phytochromes (at the position of Met-259) that binds chromophore. An engineered sequence used for X-ray crystallography forms a thioether link to biliverdin through Cys-24. The natural sequence can bind phycocyanobilin and phytochromobilin in vitro, but the identity of the natural chromophore is unknown.

It carries out the reaction ATP + protein L-histidine = ADP + protein N-phospho-L-histidine.. Photoreceptor which exists in two forms that are reversibly interconvertible by light: the R form that absorbs maximally in the red region of the spectrum and the FR form that absorbs maximally in the far-red region. Also has a slight blue shift for the far-red maximum. Could also absorb green light. May participate in regulating pigment synthesis like the carotenoid deinoxanthin which could protect the bacterium from intense visible light. This is Bacteriophytochrome (bphP) from Deinococcus radiodurans (strain ATCC 13939 / DSM 20539 / JCM 16871 / CCUG 27074 / LMG 4051 / NBRC 15346 / NCIMB 9279 / VKM B-1422 / R1).